The sequence spans 470 residues: Uronate isomerase (470 aa).

The protein belongs to the metallo-dependent hydrolases superfamily. Uronate isomerase family.

The catalysed reaction is D-glucuronate = D-fructuronate. The enzyme catalyses aldehydo-D-galacturonate = keto-D-tagaturonate. The protein operates within carbohydrate metabolism; pentose and glucuronate interconversion. The polypeptide is Uronate isomerase (Shigella boydii serotype 4 (strain Sb227)).